Reading from the N-terminus, the 478-residue chain is Pyrrolysine--tRNA ligase (478 aa).

The segment at 106-188 is disordered; the sequence is VMPKSVARTP…TSAMPASTSA (83 aa). A compositionally biased stretch (polar residues) spans 122-132; it reads APVQTLPSESQ. Residues 133–188 show a composition bias toward low complexity; sequence PAPTTPISASTTAPASTSTTAPAPASTTAPAPASTTAPASASTTISTSAMPASTSA.

This sequence belongs to the class-II aminoacyl-tRNA synthetase family.

It is found in the cytoplasm. The enzyme catalyses tRNA(Pyl) + L-pyrrolysine + ATP = L-pyrrolysyl-tRNA(Pyl) + AMP + diphosphate. Its function is as follows. Catalyzes the attachment of pyrrolysine to tRNA(Pyl). Pyrrolysine is a lysine derivative encoded by the termination codon UAG. The protein is Pyrrolysine--tRNA ligase of Methanosarcina thermophila.